We begin with the raw amino-acid sequence, 445 residues long: Phosphoglucosamine mutase (445 aa).

Serine 102 functions as the Phosphoserine intermediate in the catalytic mechanism. 4 residues coordinate Mg(2+): serine 102, aspartate 241, aspartate 243, and aspartate 245. Serine 102 is subject to Phosphoserine.

Belongs to the phosphohexose mutase family. It depends on Mg(2+) as a cofactor. Post-translationally, activated by phosphorylation.

The catalysed reaction is alpha-D-glucosamine 1-phosphate = D-glucosamine 6-phosphate. Its function is as follows. Catalyzes the conversion of glucosamine-6-phosphate to glucosamine-1-phosphate. The protein is Phosphoglucosamine mutase of Escherichia fergusonii (strain ATCC 35469 / DSM 13698 / CCUG 18766 / IAM 14443 / JCM 21226 / LMG 7866 / NBRC 102419 / NCTC 12128 / CDC 0568-73).